The sequence spans 338 residues: Phosphoribosylformylglycinamidine cyclo-ligase (338 aa).

Belongs to the AIR synthase family.

The protein localises to the cytoplasm. The catalysed reaction is 2-formamido-N(1)-(5-O-phospho-beta-D-ribosyl)acetamidine + ATP = 5-amino-1-(5-phospho-beta-D-ribosyl)imidazole + ADP + phosphate + H(+). It participates in purine metabolism; IMP biosynthesis via de novo pathway; 5-amino-1-(5-phospho-D-ribosyl)imidazole from N(2)-formyl-N(1)-(5-phospho-D-ribosyl)glycinamide: step 2/2. In Lactococcus lactis subsp. lactis (strain IL1403) (Streptococcus lactis), this protein is Phosphoribosylformylglycinamidine cyclo-ligase.